The sequence spans 311 residues: Probable cell division protein WhiA (311 aa).

Residues 274–307 (SLKELGSLLTPPLTKSGVNHRFRKLELIAEKIRN) constitute a DNA-binding region (H-T-H motif).

This sequence belongs to the WhiA family.

In terms of biological role, involved in cell division and chromosome segregation. This Carboxydothermus hydrogenoformans (strain ATCC BAA-161 / DSM 6008 / Z-2901) protein is Probable cell division protein WhiA.